The sequence spans 507 residues: GMP synthase [glutamine-hydrolyzing] (507 aa).

Residues 4-193 (KIIILDFGSQ…VVDVCGCKQD (190 aa)) form the Glutamine amidotransferase type-1 domain. The Nucleophile role is filled by cysteine 79. Active-site residues include histidine 167 and glutamate 169. A GMPS ATP-PPase domain is found at 194 to 382 (WSPASFIEST…LGMPEHLITR (189 aa)). 221 to 227 (SGGVDSS) lines the ATP pocket.

As to quaternary structure, homodimer.

The catalysed reaction is XMP + L-glutamine + ATP + H2O = GMP + L-glutamate + AMP + diphosphate + 2 H(+). Its pathway is purine metabolism; GMP biosynthesis; GMP from XMP (L-Gln route): step 1/1. Functionally, catalyzes the synthesis of GMP from XMP. The polypeptide is GMP synthase [glutamine-hydrolyzing] (Bacteroides fragilis (strain ATCC 25285 / DSM 2151 / CCUG 4856 / JCM 11019 / LMG 10263 / NCTC 9343 / Onslow / VPI 2553 / EN-2)).